The following is an 888-amino-acid chain: Autophagy-related protein 9 (888 aa).

The disordered stretch occupies residues 1–170 (MASNIFSRIK…PYTTPMGPQP (170 aa)). Residues 1-255 (MASNIFSRIK…CTRKMSGLWN (255 aa)) lie on the Cytoplasmic side of the membrane. Residues 13–24 (SGGSQSFYQQLR) are compositionally biased toward polar residues. Residues 28–38 (DPEYDPGLDEE) are compositionally biased toward acidic residues. Residues 123–143 (RATNPGSSRTPASVGPSSART) are compositionally biased toward polar residues. A helical transmembrane segment spans residues 256-276 (FAIWLYTFFFIWKCVQYFVEI). Residues 277 to 422 (RRLTYIRDFY…RLLSQKLRQR (146 aa)) lie on the Lumenal side of the membrane. A helical membrane pass occupies residues 423–443 (FLFAGFLNLLFAPVVLAYVVI). The Cytoplasmic portion of the chain corresponds to 444 to 511 (VYFFTYYYEY…PKRITEAVAR (68 aa)). An intramembrane segment occupies 512–532 (TIAFMSGAITAILAIGSVLDS). The Cytoplasmic segment spans residues 533–544 (ELFLNFEITKDR). Residues 545–565 (PVIFYLGVFAAIWATTRGMVS) form a helical membrane-spanning segment. The Lumenal segment spans residues 566-611 (EETLVFNPEYALRNVIEYTRYVPDHWKNKLHSSEVKQEFSELYKMK). A helical membrane pass occupies residues 612 to 632 (VVIFLEEMMGIVTTPMLLLFS). Topologically, residues 633-642 (LPRCSDQIVD) are cytoplasmic. An intramembrane segment occupies 643–663 (FFREFTIHVDGLGYVCSFAVF). The Cytoplasmic segment spans residues 664–888 (DFQKGPGNTG…QRPRRGGGMV (225 aa)). Disordered stretches follow at residues 748–770 (GRTG…PRIG) and 834–866 (EPGG…DPEA).

The protein belongs to the ATG9 family. In terms of assembly, homotrimer; forms a homotrimer with a central pore that forms a path between the two membrane leaflets. Post-translationally, phosphorylated by ATG1. ATG1 phosphorylation is required for ATG18 interaction and preautophagosome elongation.

The protein resides in the preautophagosomal structure membrane. It is found in the cytoplasmic vesicle membrane. It localises to the golgi apparatus membrane. Its subcellular location is the endoplasmic reticulum membrane. It carries out the reaction a 1,2-diacyl-sn-glycero-3-phosphocholine(in) = a 1,2-diacyl-sn-glycero-3-phosphocholine(out). The catalysed reaction is a 1,2-diacyl-sn-glycero-3-phospho-L-serine(in) = a 1,2-diacyl-sn-glycero-3-phospho-L-serine(out). The enzyme catalyses a 1,2-diacyl-sn-glycero-3-phosphoethanolamine(in) = a 1,2-diacyl-sn-glycero-3-phosphoethanolamine(out). It catalyses the reaction a 1,2-diacyl-sn-glycero-3-phospho-(1D-myo-inositol-3-phosphate)(in) = a 1,2-diacyl-sn-glycero-3-phospho-(1D-myo-inositol-3-phosphate)(out). In terms of biological role, phospholipid scramblase involved in autophagy and cytoplasm to vacuole transport (Cvt) vesicle formation. Cycles between the preautophagosomal structure/phagophore assembly site (PAS) and the cytoplasmic vesicle pool and supplies membrane for the growing autophagosome. Lipid scramblase activity plays a key role in preautophagosomal structure/phagophore assembly by distributing the phospholipids that arrive through ATG2 from the cytoplasmic to the luminal leaflet of the bilayer, thereby driving autophagosomal membrane expansion. Required for mitophagy. Also involved in endoplasmic reticulum-specific autophagic process and is essential for the survival of cells subjected to severe ER stress. Different machineries are required for anterograde trafficking to the PAS during either the Cvt pathway or bulk autophagy and for retrograde trafficking. Autophagy is required for proper vegetative growth, asexual/sexual reproduction, and full virulence. Autophagy is particularly involved in the biosynthesis of deoxynivalenol (DON), an important virulence determinant. Required for aerial hyphae development and lipid droplet degradation in response to starvation. This is Autophagy-related protein 9 from Gibberella zeae (strain ATCC MYA-4620 / CBS 123657 / FGSC 9075 / NRRL 31084 / PH-1) (Wheat head blight fungus).